We begin with the raw amino-acid sequence, 333 residues long: Homeobox protein Hox-D13 (333 aa).

The segment at M1–V24 is disordered. Positions G12 to V24 are enriched in low complexity. The segment at residues G266 to V325 is a DNA-binding region (homeobox).

It belongs to the Abd-B homeobox family.

The protein resides in the nucleus. Sequence-specific transcription factor that binds gene promoters and activates their transcription. Part of a developmental regulatory system that provides cells with specific positional identities on the anterior-posterior axis. This chain is Homeobox protein Hox-D13 (HOXD13), found in Carollia perspicillata (Seba's short-tailed bat).